A 106-amino-acid polypeptide reads, in one-letter code: MANKIHVRKQDSVVVISGKDRGKIGEVLAVNPKKGTVLIKDVNVVVKHQKANKENMQGGLIKKEAPINSAKVMLYCTKCKTATRISKKVLDDGTKVRVCKKCGETF.

This sequence belongs to the universal ribosomal protein uL24 family. In terms of assembly, part of the 50S ribosomal subunit.

Its function is as follows. One of two assembly initiator proteins, it binds directly to the 5'-end of the 23S rRNA, where it nucleates assembly of the 50S subunit. One of the proteins that surrounds the polypeptide exit tunnel on the outside of the subunit. The polypeptide is Large ribosomal subunit protein uL24 (Clostridium acetobutylicum (strain ATCC 824 / DSM 792 / JCM 1419 / IAM 19013 / LMG 5710 / NBRC 13948 / NRRL B-527 / VKM B-1787 / 2291 / W)).